Consider the following 364-residue polypeptide: tRNA (adenine(58)-N(1))-methyltransferase catalytic subunit trm61 (364 aa).

S-adenosyl-L-methionine contacts are provided by residues 114-116 (SAS), E135, R140, 167-168 (DV), and D186. The tract at residues 280–309 (EQNLSSDAKVEDQDNDSMLGENKSSVSTET) is disordered.

Belongs to the class I-like SAM-binding methyltransferase superfamily. TRM61 family. In terms of assembly, heterotetramer; composed of two copies of TRM6 and two copies of TRM61.

Its subcellular location is the nucleus. It carries out the reaction adenosine(58) in tRNA + S-adenosyl-L-methionine = N(1)-methyladenosine(58) in tRNA + S-adenosyl-L-homocysteine + H(+). Its function is as follows. Catalytic subunit of tRNA (adenine-N(1)-)-methyltransferase, which catalyzes the formation of N(1)-methyladenine at position 58 (m1A58) in initiator methionyl-tRNA. The sequence is that of tRNA (adenine(58)-N(1))-methyltransferase catalytic subunit trm61 (cpd1) from Schizosaccharomyces pombe (strain 972 / ATCC 24843) (Fission yeast).